The chain runs to 98 residues: Large ribosomal subunit protein uL23 (98 aa).

The protein belongs to the universal ribosomal protein uL23 family. As to quaternary structure, part of the 50S ribosomal subunit. Contacts protein L29, and trigger factor when it is bound to the ribosome.

One of the early assembly proteins it binds 23S rRNA. One of the proteins that surrounds the polypeptide exit tunnel on the outside of the ribosome. Forms the main docking site for trigger factor binding to the ribosome. This Koribacter versatilis (strain Ellin345) protein is Large ribosomal subunit protein uL23.